Reading from the N-terminus, the 258-residue chain is Cell division protein FtsQ (258 aa).

The Cytoplasmic segment spans residues 1-29; sequence MAKNAPAPRGARRKPVKKVGVPLRERVAT. The helical transmembrane segment at 30-50 threads the bilayer; it reads AVPWMLVGSVAMVSLLAVIYL. The Periplasmic segment spans residues 51 to 258; that stretch reads PAALDGYPIR…MAVTWREQQS (208 aa). A POTRA domain is found at 57–127; sequence YPIRKVGVDG…DTVVLTVEER (71 aa).

Belongs to the FtsQ/DivIB family. FtsQ subfamily. As to quaternary structure, part of a complex composed of FtsB, FtsL and FtsQ.

Its subcellular location is the cell inner membrane. In terms of biological role, essential cell division protein. May link together the upstream cell division proteins, which are predominantly cytoplasmic, with the downstream cell division proteins, which are predominantly periplasmic. May control correct divisome assembly. This chain is Cell division protein FtsQ, found in Alcanivorax borkumensis (strain ATCC 700651 / DSM 11573 / NCIMB 13689 / SK2).